The chain runs to 827 residues: MSSPDDFETAPAEYVDALDPSMVVVDSGSAAVTAPSDSAAEVKANQNEENTGATAAETSEKVDQTEVEKKDDDDTTEVGVTTTTPSIADTAATANIASTSGASVTEPTTDDTAADEKKEQVSGPPLSNMKFYLNRDADAHDSLNDIDQLARLIRANGGEVLDSKPRESKENVFIVSPYNHTNLPTVTPTYIKACCQSNSLLNMENYLVPYDNFREVVDSRLQEESHSNGVDNSNSNSDNKDSIRPKTEIISTNTNGATEDSTSEKVMVDAEQQARLQEQAQLLRQHVSSTASITSGGHNDLVQIEQPQKDTSNNNNSNVNDEDNDLLTQDNNPQTADEGNASFQAQRSMISRGALPSHNKASFTDEEDEFILDVVRKNPTRRTTHTLYDEISHYVPNHTGNSIRHRFRVYLSKRLEYVYEVDKFGKLVRDDDGNLIKTKVLPPSIKRKFSADEDYTLAIAVKKQFYRDLFQIDPDTGRSLITDEDTPTAIARRNMTMDPNHVPGSEPNFAAYRTQSRRGPIAREFFKHFAEEHAAHTENAWRDRFRKFLLAYGIDDYISYYEAEKAQNREPEPMKNLTNRPKRPGVPTPGNYNSAAKRARNYSSQRNVQPTANAASANAAAAAAAAASNSYAIPENELLDEDTMNFISSLKNDLSNISNSLPFEYPHEIAEAIRSDFSNEDIYDNIDPDTISFPPKIATTDLFLPLFFHFGSTRQFMDKLHEVISGDYEPSQAEKLVQDLCDETGIRKNFSTSILTCLSGDLMVFPRYFLNMFKDNVNPPPNVPGIWTHDDDESLKSNDQEQIRKLVKKHGTGRMEMRKRFFEKDLL.

3 disordered regions span residues 29 to 128 (SAAV…PLSN), 221 to 268 (LQEE…KVMV), and 308 to 339 (QKDT…ADEG). The segment covering 44-57 (ANQNEENTGATAAE) has biased composition (polar residues). Positions 58–72 (TSEKVDQTEVEKKDD) are enriched in basic and acidic residues. A compositionally biased stretch (polar residues) spans 92–107 (ATANIASTSGASVTEP). One can recognise a BRCT domain in the interval 121–208 (VSGPPLSNMK…SLLNMENYLV (88 aa)). Residues 227-237 (SNGVDNSNSNS) are compositionally biased toward low complexity. Over residues 238 to 247 (DNKDSIRPKT) the composition is skewed to basic and acidic residues. Residues 249 to 260 (IISTNTNGATED) show a composition bias toward polar residues. A compositionally biased stretch (low complexity) spans 310–319 (DTSNNNNSNV). Polar residues predominate over residues 326–339 (LLTQDNNPQTADEG). The HTH myb-type domain occupies 355–415 (LPSHNKASFT…RFRVYLSKRL (61 aa)). A DNA-binding region (H-T-H motif) is located at residues 388 to 411 (YDEISHYVPNHTGNSIRHRFRVYL). Thr-486 is subject to Phosphothreonine. Positions 567 to 613 (QNREPEPMKNLTNRPKRPGVPTPGNYNSAAKRARNYSSQRNVQPTAN) are disordered. Positions 601–611 (NYSSQRNVQPT) are enriched in polar residues. An activation domain region spans residues 630–695 (SYAIPENELL…IDPDTISFPP (66 aa)). The residue at position 731 (Ser-731) is a Phosphoserine.

The protein belongs to the RAP1 family. Interacts (via C-terminus) with RIF1. Interacts (via C-terminus) with SIR3. Interacts (via C-terminus) with SIR4. Interacts with a GCR1 homodimer.

It localises to the nucleus. The protein localises to the chromosome. Its subcellular location is the telomere. Its function is as follows. Essential regulatory protein in yeast whose DNA-binding sites are found at three types of chromosomal elements: promoters, silencers, and telomeres. RAP1 is also involved in the regulation of telomere structure, where its binding sites are found within the terminal poly[C(1-3)A] sequences. The opposite regulatory functions of RAP1 are not intrinsic to its binding sites but, instead, result from interactions with different factors at promoters and silencers. RAP1 mediates repression of the HM loci and telomeres by recruiting the SIR complex. May also target the binding of RIF1 and RIF2 to silencers and telomeres. Forms with GCR1 a transcriptional activation complex that is required for expression of glycolytic and ribosomal gene. The sequence is that of DNA-binding protein RAP1 (RAP1) from Saccharomyces cerevisiae (strain ATCC 204508 / S288c) (Baker's yeast).